A 550-amino-acid chain; its full sequence is Chaperonin GroEL 2 (550 aa).

Residues 30–33, Lys-51, 87–91, Gly-415, and Asp-496 each bind ATP; these read TLGP and DGTTT.

Belongs to the chaperonin (HSP60) family. As to quaternary structure, forms a cylinder of 14 subunits composed of two heptameric rings stacked back-to-back. Interacts with the co-chaperonin GroES.

It localises to the cytoplasm. The catalysed reaction is ATP + H2O + a folded polypeptide = ADP + phosphate + an unfolded polypeptide.. Functionally, together with its co-chaperonin GroES, plays an essential role in assisting protein folding. The GroEL-GroES system forms a nano-cage that allows encapsulation of the non-native substrate proteins and provides a physical environment optimized to promote and accelerate protein folding. The sequence is that of Chaperonin GroEL 2 from Bradyrhizobium diazoefficiens (strain JCM 10833 / BCRC 13528 / IAM 13628 / NBRC 14792 / USDA 110).